Here is a 606-residue protein sequence, read N- to C-terminus: Probable translation initiation factor IF-2 (606 aa).

Residues 11–230 (IRQPIVVVLG…LTGLVQRFMK (220 aa)) enclose the tr-type G domain. The segment at 20 to 27 (GHVDHGKT) is G1. GTP is bound at residue 20–27 (GHVDHGKT). A G2 region spans residues 45–49 (EITQH). The G3 stretch occupies residues 85 to 88 (DTPG). GTP is bound by residues 85-89 (DTPGH) and 139-142 (NKID). The segment at 139 to 142 (NKID) is G4. Positions 207 to 209 (SAK) are G5.

This sequence belongs to the TRAFAC class translation factor GTPase superfamily. Classic translation factor GTPase family. IF-2 subfamily.

Functionally, function in general translation initiation by promoting the binding of the formylmethionine-tRNA to ribosomes. Seems to function along with eIF-2. The chain is Probable translation initiation factor IF-2 from Staphylothermus marinus (strain ATCC 43588 / DSM 3639 / JCM 9404 / F1).